The following is a 512-amino-acid chain: Annexin A7 (512 aa).

A compositionally biased stretch (low complexity) spans 14–38; it reads GYPGGDPSYPPAAQQAFPGGQFPPA. Disordered regions lie at residues 14–62 and 146–190; these read GYPG…GYPH and GGFS…AQPT. The segment covering 39–52 has biased composition (gly residues); the sequence is AGGGAFPPASGGGN. The segment covering 164–182 has biased composition (low complexity); it reads MPGQMPGQMPGQAPSGYPS. Annexin repeat units follow at residues 209–279, 280–351, 364–436, and 440–511; these read FDAL…ALFM, PSTY…SIMA, QQAE…AVLQ, and NRPL…AISG.

Belongs to the annexin family.

In terms of biological role, calcium/phospholipid-binding protein which promotes membrane fusion and is involved in exocytosis. The polypeptide is Annexin A7 (anxa7) (Xenopus laevis (African clawed frog)).